The sequence spans 295 residues: Histamine N-methyltransferase (295 aa).

Glutamate 28 is a binding site for substrate. S-adenosyl-L-methionine-binding residues include glycine 60, glutamate 89, glutamine 94, serine 120, and isoleucine 143. Asparagine 284 provides a ligand contact to substrate.

The protein belongs to the class I-like SAM-binding methyltransferase superfamily. HNMT family. In terms of assembly, monomer.

The protein resides in the cytoplasm. The catalysed reaction is histamine + S-adenosyl-L-methionine = N(tau)-methylhistamine + S-adenosyl-L-homocysteine + H(+). Functionally, inactivates histamine by N-methylation. Plays an important role in degrading histamine and in regulating the airway response to histamine. The sequence is that of Histamine N-methyltransferase (Hnmt) from Mus musculus (Mouse).